Consider the following 1742-residue polypeptide: Kinase non-catalytic C-lobe domain-containing protein 1 (1742 aa).

A KIND 1 domain is found at valine 37–glycine 217. 2 disordered regions span residues tryptophan 215–alanine 288 and phenylalanine 365–serine 455. Phosphoserine is present on serine 267. Residues leucine 403–serine 412 show a composition bias toward polar residues. Residues aspartate 426–arginine 445 show a composition bias toward basic and acidic residues. The 165-residue stretch at leucine 456–glutamate 620 folds into the KIND 2 domain. Disordered stretches follow at residues aspartate 703–threonine 727, serine 744–alanine 876, glycine 948–isoleucine 1006, and valine 1028–phenylalanine 1076. A compositionally biased stretch (basic and acidic residues) spans serine 711–threonine 727. The segment covering glycine 755–threonine 771 has biased composition (low complexity). The segment covering valine 782–threonine 791 has biased composition (polar residues). A compositionally biased stretch (basic and acidic residues) spans serine 847–leucine 861. The span at proline 949 to glutamate 965 shows a compositional bias: low complexity. Position 951 is a phosphoserine (serine 951). The segment covering glycine 1043–serine 1053 has biased composition (polar residues). The stretch at histidine 1112–serine 1177 forms a coiled coil. Positions lysine 1239–arginine 1367 constitute an N-terminal Ras-GEF domain. The 252-residue stretch at serine 1461 to alanine 1712 folds into the Ras-GEF domain.

In terms of assembly, interacts (via KIND2) with MAP2; the interaction enhances MAP2 phosphorylation and localizes KNDC1 to dendrites. In terms of tissue distribution, highly expressed in the brain and at low levels in the ovary. In the brain it is most prominently expressed in the cerebellum where it is restricted to the granular Purkinje cell layer.

Its subcellular location is the cell projection. It is found in the dendrite. It localises to the perikaryon. In terms of biological role, RAS-Guanine nucleotide exchange factor (GEF) that controls the negative regulation of neuronal dendrite growth by mediating a signaling pathway linking RAS and MAP2. May be involved in cellular senescence. In Mus musculus (Mouse), this protein is Kinase non-catalytic C-lobe domain-containing protein 1.